Reading from the N-terminus, the 605-residue chain is Methyl-CpG-binding domain protein 1 (605 aa).

One can recognise an MBD domain in the interval 1–69 (MAEDWLDCPA…TLFDFKQGIL (69 aa)). Positions 80–123 (AVASKKRKKPSRPAKTRKRQVGPQSGEVRKEAPRDETKADTDTA) are disordered. Positions 83–99 (SKKRKKPSRPAKTRKRQ) are enriched in basic residues. Residues 84–88 (KKRKK) carry the Nuclear localization signal motif. The segment covering 106–120 (EVRKEAPRDETKADT) has biased composition (basic and acidic residues). Residue Lys117 forms a Glycyl lysine isopeptide (Lys-Gly) (interchain with G-Cter in SUMO2) linkage. CXXC-type zinc fingers lie at residues 169–216 (RMFK…RRCL) and 217–263 (RIVE…RRCL). Residues Cys176, Cys179, Cys182, Cys188, Cys191, Cys194, Cys210, Cys215, Cys225, Cys228, Cys231, Cys237, Cys240, Cys243, Cys257, and Cys262 each coordinate Zn(2+). Residues 269-308 (RRKGGCDSKMAARRRPGAQPLPPPPPSQSPEPTEPHPRAL) are disordered. Residue Lys277 forms a Glycyl lysine isopeptide (Lys-Gly) (interchain with G-Cter in SUMO2) linkage. Over residues 287-297 (QPLPPPPPSQS) the composition is skewed to pro residues. At Ser297 the chain carries Phosphoserine. A CXXC-type 3 zinc finger spans residues 330 to 378 (TNRRQNRKCGACAACLRRMDCGRCDFCCDKPKFGGSNQKRQKCRWRQCL). Cys338, Cys341, Cys344, Cys350, Cys353, Cys356, Cys372, and Cys377 together coordinate Zn(2+). Residues Ser391 and Ser399 each carry the phosphoserine modification. A disordered region spans residues 391 to 451 (SESEDGAGSP…EAGGGFVLPP (61 aa)). Basic residues predominate over residues 403–417 (YRRRKRPSSARRHHL). Lys422 participates in a covalent cross-link: Glycyl lysine isopeptide (Lys-Gly) (interchain with G-Cter in SUMO2). The span at 426–439 (ATRTAQPDHTQAPT) shows a compositional bias: polar residues. Lys440 is covalently cross-linked (Glycyl lysine isopeptide (Lys-Gly) (interchain with G-Cter in SUMO2)). Residues Lys499 and Lys538 each participate in a glycyl lysine isopeptide (Lys-Gly) (interchain with G-Cter in SUMO2); alternate cross-link. The segment at 520–573 (VLVPGCPSKAVDPGLPSVKQEPPDPEEDKEENKDDSASKLAPEEEAGGAGTPVI) is disordered. Residues 529–592 (AVDPGLPSVK…RFRDTAVWLP (64 aa)) form a transcriptional repression domain (TRD) region. Lys558 is covalently cross-linked (Glycyl lysine isopeptide (Lys-Gly) (interchain with G-Cter in SUMO2)).

In terms of assembly, interacts with OASL, ATF7IP, ATF7IP2 and BAHD1. Binds CHAF1A and the SUV39H1-CBX5 complex via the MBD domain. Binds MGP via the TRD domain. May be part of the MeCP1 complex. In terms of processing, sumoylated, sumoylation may increase interaction with ATF7IP. As to expression, widely expressed.

The protein localises to the nucleus. The protein resides in the nucleus matrix. It is found in the nucleus speckle. Its subcellular location is the chromosome. Functionally, transcriptional repressor that binds CpG islands in promoters where the DNA is methylated at position 5 of cytosine within CpG dinucleotides. Binding is abolished by the presence of 7-mG that is produced by DNA damage by methylmethanesulfonate (MMS). Acts as transcriptional repressor and plays a role in gene silencing by recruiting ATF7IP, which in turn recruits factors such as the histone methyltransferase SETDB1. Probably forms a complex with SETDB1 and ATF7IP that represses transcription and couples DNA methylation and histone 'Lys-9' trimethylation. Isoform 1 and isoform 2 can also repress transcription from unmethylated promoters. The chain is Methyl-CpG-binding domain protein 1 from Homo sapiens (Human).